A 234-amino-acid polypeptide reads, in one-letter code: 2-C-methyl-D-erythritol 4-phosphate cytidylyltransferase (234 aa).

It belongs to the IspD/TarI cytidylyltransferase family. IspD subfamily.

The catalysed reaction is 2-C-methyl-D-erythritol 4-phosphate + CTP + H(+) = 4-CDP-2-C-methyl-D-erythritol + diphosphate. The protein operates within isoprenoid biosynthesis; isopentenyl diphosphate biosynthesis via DXP pathway; isopentenyl diphosphate from 1-deoxy-D-xylulose 5-phosphate: step 2/6. Catalyzes the formation of 4-diphosphocytidyl-2-C-methyl-D-erythritol from CTP and 2-C-methyl-D-erythritol 4-phosphate (MEP). The chain is 2-C-methyl-D-erythritol 4-phosphate cytidylyltransferase from Thermosynechococcus vestitus (strain NIES-2133 / IAM M-273 / BP-1).